Consider the following 147-residue polypeptide: Acidic phospholipase A2 S7-48J (147 aa).

A signal peptide spans 1–19 (MYPAHLLVLLAVCVSLLGA). Residues 20 to 27 (SDIPPQPL) constitute a propeptide that is removed on maturation. Cystine bridges form between Cys-38/Cys-99, Cys-54/Cys-146, Cys-56/Cys-72, Cys-71/Cys-127, Cys-78/Cys-120, Cys-88/Cys-113, and Cys-106/Cys-118. Ca(2+)-binding residues include Tyr-55, Gly-57, and Gly-59. His-75 is an active-site residue. Residue Asp-76 participates in Ca(2+) binding. Asp-121 is a catalytic residue.

Belongs to the phospholipase A2 family. Group I subfamily. D49 sub-subfamily. Ca(2+) is required as a cofactor. In terms of tissue distribution, expressed by the venom gland.

It localises to the secreted. It carries out the reaction a 1,2-diacyl-sn-glycero-3-phosphocholine + H2O = a 1-acyl-sn-glycero-3-phosphocholine + a fatty acid + H(+). Its function is as follows. Snake venom phospholipase A2 (PLA2) that inhibits collagen-induced platelet aggregation. PLA2 catalyzes the calcium-dependent hydrolysis of the 2-acyl groups in 3-sn-phosphoglycerides. The sequence is that of Acidic phospholipase A2 S7-48J from Austrelaps superbus (Lowland copperhead snake).